The primary structure comprises 240 residues: Ribosomal RNA small subunit methyltransferase G (240 aa).

Residues Gly80, Phe85, 103 to 105 (DSS), 131 to 132 (AE), and Arg150 each bind S-adenosyl-L-methionine.

Belongs to the methyltransferase superfamily. RNA methyltransferase RsmG family.

It localises to the cytoplasm. Its function is as follows. Specifically methylates the N7 position of a guanine in 16S rRNA. This is Ribosomal RNA small subunit methyltransferase G from Thermoanaerobacter sp. (strain X514).